The primary structure comprises 103 residues: Large ribosomal subunit protein bL21 (103 aa).

The protein belongs to the bacterial ribosomal protein bL21 family. Part of the 50S ribosomal subunit. Contacts protein L20.

This protein binds to 23S rRNA in the presence of protein L20. This Beijerinckia indica subsp. indica (strain ATCC 9039 / DSM 1715 / NCIMB 8712) protein is Large ribosomal subunit protein bL21.